The primary structure comprises 436 residues: Ribulose bisphosphate carboxylase large chain (436 aa).

Substrate contacts are provided by N104 and T154. The active-site Proton acceptor is K156. K158 is a binding site for substrate. Residues K182, D184, and E185 each contribute to the Mg(2+) site. The residue at position 182 (K182) is an N6-carboxylysine. Catalysis depends on H275, which acts as the Proton acceptor. Substrate is bound by residues R276, H308, and S360.

This sequence belongs to the RuBisCO large chain family. Type I subfamily. Heterohexadecamer of 8 large chains and 8 small chains. The cofactor is Mg(2+).

The protein localises to the plastid. It localises to the chloroplast. It carries out the reaction 2 (2R)-3-phosphoglycerate + 2 H(+) = D-ribulose 1,5-bisphosphate + CO2 + H2O. The catalysed reaction is D-ribulose 1,5-bisphosphate + O2 = 2-phosphoglycolate + (2R)-3-phosphoglycerate + 2 H(+). Functionally, ruBisCO catalyzes two reactions: the carboxylation of D-ribulose 1,5-bisphosphate, the primary event in carbon dioxide fixation, as well as the oxidative fragmentation of the pentose substrate in the photorespiration process. Both reactions occur simultaneously and in competition at the same active site. This chain is Ribulose bisphosphate carboxylase large chain, found in Euglena viridis (Cercaria viridis).